The sequence spans 198 residues: Ribosomal RNA small subunit methyltransferase G (198 aa).

Residues Gly-74, Phe-79, 123–124, and Arg-136 each bind S-adenosyl-L-methionine; that span reads IQ.

It belongs to the methyltransferase superfamily. RNA methyltransferase RsmG family.

The protein localises to the cytoplasm. It catalyses the reaction guanosine(527) in 16S rRNA + S-adenosyl-L-methionine = N(7)-methylguanosine(527) in 16S rRNA + S-adenosyl-L-homocysteine. Functionally, specifically methylates the N7 position of guanine in position 527 of 16S rRNA. The polypeptide is Ribosomal RNA small subunit methyltransferase G (Orientia tsutsugamushi (strain Boryong) (Rickettsia tsutsugamushi)).